Reading from the N-terminus, the 517-residue chain is UDP-N-acetylmuramyl-tripeptide synthetase (517 aa).

Ser38 provides a ligand contact to UDP-N-acetyl-alpha-D-muramoyl-L-alanyl-D-glutamate. An ATP-binding site is contributed by 116–122; sequence GTKGKTT. Residues Asn160, 162 to 163, Ser189, and Arg197 each bind UDP-N-acetyl-alpha-D-muramoyl-L-alanyl-D-glutamate; that span reads TT. The residue at position 231 (Lys231) is an N6-carboxylysine.

The protein belongs to the MurCDEF family. MurE subfamily. Post-translationally, carboxylation is probably crucial for Mg(2+) binding and, consequently, for the gamma-phosphate positioning of ATP.

Its subcellular location is the cytoplasm. Its pathway is cell wall biogenesis; peptidoglycan biosynthesis. Catalyzes the addition of an amino acid to the nucleotide precursor UDP-N-acetylmuramoyl-L-alanyl-D-glutamate (UMAG) in the biosynthesis of bacterial cell-wall peptidoglycan. This Lacticaseibacillus paracasei (strain ATCC 334 / BCRC 17002 / CCUG 31169 / CIP 107868 / KCTC 3260 / NRRL B-441) (Lactobacillus paracasei) protein is UDP-N-acetylmuramyl-tripeptide synthetase.